The sequence spans 379 residues: MSTKGKVIKCKAAIAWEAGKPLSIEEVEVAPPKAHEVRVQIIAASVCRSDTYVINPAFKEGLLPVILGHECAGIVESVGPGVNNFKPGDKVIPLYVPHCRKCKFCQSPLTNFCTKFSEHKNPIIEQELMDDKTSRFTCKGKSIYHFLGISAFSQYTVVKDINLAKIDDDANLKRVCLIGCGFSTGYGAAINDAKVTPGSTCAVFGLGGVGLSAVIGCKTAGASRIIAVDINSDKFAKAKALGATDCLNPRELNKPVQDVIVEMTNGGVDFAIDCAGGSEVMKATVDCTTVGWGSCTFVGVNVNDKGLTISPVELILGRTLRGSSFGGWDVDTVPKLVSDYKNGKFNLEALVTHTLPFEKINEALDLLKQGKSIRTILIY.

Residues cysteine 47, histidine 69, cysteine 99, cysteine 102, cysteine 105, cysteine 113, and cysteine 176 each contribute to the Zn(2+) site. NAD(+) is bound by residues 205 to 210 (GLGGVG), aspartate 229, lysine 234, 298 to 300 (VGV), and arginine 374.

The protein belongs to the zinc-containing alcohol dehydrogenase family. Class-II subfamily. Homodimer. It depends on Zn(2+) as a cofactor.

The protein resides in the cytoplasm. The catalysed reaction is a primary alcohol + NAD(+) = an aldehyde + NADH + H(+). It catalyses the reaction a secondary alcohol + NAD(+) = a ketone + NADH + H(+). The chain is Alcohol dehydrogenase class-2 isozyme 2 (ADH2-2) from Oryctolagus cuniculus (Rabbit).